A 291-amino-acid polypeptide reads, in one-letter code: Quinol oxidase subunit 2 (291 aa).

Positions 1 to 28 are cleaved as a signal peptide; the sequence is MQLKKAFWKLASLLPXSLLLFLGGCDKK. Helical transmembrane passes span 49–69 and 91–111; these read SFLL…VILI and LEII…IPTV.

Belongs to the cytochrome c oxidase subunit 2 family.

It is found in the cell membrane. It catalyses the reaction 2 a quinol + O2 = 2 a quinone + 2 H2O. Catalyzes quinol oxidation with the concomitant reduction of oxygen to water. Subunit II transfers the electrons from a quinol to the binuclear center of the catalytic subunit I. This chain is Quinol oxidase subunit 2, found in Bacillus cereus (strain ATCC 10987 / NRS 248).